We begin with the raw amino-acid sequence, 74 residues long: Protein kish-B (74 aa).

Residues 1 to 22 (MTNVYSLDGILVFGLLFVCTCA) form the signal peptide. The Extracellular segment spans residues 23 to 52 (YFKKVPRLKTWLLSEKKGVWGVFYKAAVIG). A helical membrane pass occupies residues 53 to 73 (TRLHAAVAIACVVMAFYVLFI). Lys-74 is a topological domain (cytoplasmic).

It belongs to the KISH family.

Its subcellular location is the golgi apparatus membrane. Its function is as follows. Involved in the early part of the secretory pathway. The sequence is that of Protein kish-B (TMEM167B) from Homo sapiens (Human).